The chain runs to 468 residues: MPDQVVTRFAPSPTGFLHIGGARTALFNWLYARGRGGKFLLRIEDTDRARSTPEATAAILQGMAWLGLDHDGEVISQFERAPRHAEVALELLAQGKAYKCFSTQDEIQAFREAAQAEKRSTLFRSPWRDADPATHPDAPYVIRIKAPQSGETVIRDQVQGDVTIRNDQLDDMVLLRSDGTPVYMLAVVVDDHDMGVTHVIRGDDHLNNAARQMMIYQAMGWEVPVWAHIPLIHGPDGKKLSKRHGALGAQEYQAMGYPAAGMRNYLARLGWSHGDDEFFTDAQAREWFDLDGIGKSPARFDLKKLENLSGQHIAVSDDAALRHEIEAYLAAAGLPALTQTQSGDLERAMYCLKDRARTFPELIEKAAFVLASRPISPDEKAAAALASVSDGILAELTPQLQNASWTRESLEEALNAFAEAHGTKFGKLAAPLRAALAGRAVTPSVFDMMLVLGRDESLARLRDAAHPA.

The short motif at P11–G21 is the 'HIGH' region element. Residues K239 to R243 carry the 'KMSKS' region motif. K242 contributes to the ATP binding site.

It belongs to the class-I aminoacyl-tRNA synthetase family. Glutamate--tRNA ligase type 1 subfamily. In terms of assembly, monomer.

It localises to the cytoplasm. The enzyme catalyses tRNA(Glu) + L-glutamate + ATP = L-glutamyl-tRNA(Glu) + AMP + diphosphate. Functionally, catalyzes the attachment of glutamate to tRNA(Glu) in a two-step reaction: glutamate is first activated by ATP to form Glu-AMP and then transferred to the acceptor end of tRNA(Glu). The protein is Glutamate--tRNA ligase 2 of Ruegeria pomeroyi (strain ATCC 700808 / DSM 15171 / DSS-3) (Silicibacter pomeroyi).